A 149-amino-acid chain; its full sequence is UPF0260 protein Avin_32930 (149 aa).

Belongs to the UPF0260 family.

The protein is UPF0260 protein Avin_32930 of Azotobacter vinelandii (strain DJ / ATCC BAA-1303).